We begin with the raw amino-acid sequence, 313 residues long: tRNA uridine(34) hydroxylase (313 aa).

One can recognise a Rhodanese domain in the interval 127 to 225 (SDPDTILIDT…YLETVPEEES (99 aa)). The active-site Cysteine persulfide intermediate is the Cys185.

It belongs to the TrhO family.

It catalyses the reaction uridine(34) in tRNA + AH2 + O2 = 5-hydroxyuridine(34) in tRNA + A + H2O. Its function is as follows. Catalyzes oxygen-dependent 5-hydroxyuridine (ho5U) modification at position 34 in tRNAs. The chain is tRNA uridine(34) hydroxylase from Gluconobacter oxydans (strain 621H) (Gluconobacter suboxydans).